The primary structure comprises 740 residues: ATP-dependent RNA helicase DDX1 (740 aa).

A necessary for interaction with HNRNPK region spans residues 1–295; that stretch reads MAAFSEMGVM…APKALIVEPS (295 aa). The interaction with dsRNA stretch occupies residues 1 to 448; the sequence is MAAFSEMGVM…DTVHHVVVPV (448 aa). Residues 1–525 are necessary for interaction with RELA; sequence MAAFSEMGVM…KIDCDNLEQY (525 aa). The region spanning 2 to 428 is the Helicase ATP-binding domain; the sequence is AAFSEMGVMP…SEKIMHFPTW (427 aa). 46-53 contacts ATP; sequence AETGSGKT. In terms of domain architecture, B30.2/SPRY spans 70–247; sequence DQQEGKKGKA…LKFNFGEEEF (178 aa). An N6-acetyllysine mark is found at lysine 239 and lysine 268. Residue lysine 281 is modified to N6-acetyllysine; alternate. A Glycyl lysine isopeptide (Lys-Gly) (interchain with G-Cter in SUMO2); alternate cross-link involves residue lysine 281. The DEAD box motif lies at 370 to 373; that stretch reads DEAD. A Phosphoserine modification is found at serine 481. The region spanning 493–681 is the Helicase C-terminal domain; that stretch reads KGEYAVRAIK…QVEPDIKVPV (189 aa). The necessary for interaction with HNRNPK stretch occupies residues 525–740; that stretch reads YFMQQGGGPD…YLPNQLFRTF (216 aa).

Belongs to the DEAD box helicase family. DDX1 subfamily. Found in a multi-helicase-TICAM1 complex at least composed of DHX36, DDX1, DDX21 and TICAM1; this complex exists in resting cells with or without poly(I:C) RNA ligand stimulation. Interacts with DHX36. Interacts (via B30.2/SPRY domain) with DDX21 (via N-terminus); this interaction serves as bridges to TICAM1. Interacts with FAM98A (via N- and C-terminus). Interacts with PHF5A (via C-terminus). Interacts with MBNL1. Interacts with CSTF2. Interacts with HNRNPK. Interacts with ATM. Interacts with RELA (via C-terminus). Component of the tRNA-splicing ligase complex. Interacts with PQBP1. Interacts with ERCC6. In terms of processing, phosphorylated by ATM kinase; phosphorylation is increased in response to ionizing radiation (IR).

The protein localises to the nucleus. Its subcellular location is the cytoplasm. It localises to the cytoplasmic granule. It is found in the cytosol. The protein resides in the mitochondrion. The enzyme catalyses ATP + H2O = ADP + phosphate + H(+). Functionally, acts as an ATP-dependent RNA helicase, able to unwind both RNA-RNA and RNA-DNA duplexes. Possesses 5' single-stranded RNA overhang nuclease activity. Possesses ATPase activity on various RNA, but not DNA polynucleotides. May play a role in RNA clearance at DNA double-strand breaks (DSBs), thereby facilitating the template-guided repair of transcriptionally active regions of the genome. Together with RELA, acts as a coactivator to enhance NF-kappa-B-mediated transcriptional activation. Acts as a positive transcriptional regulator of cyclin CCND2 expression. Binds to the cyclin CCND2 promoter region. Associates with chromatin at the NF-kappa-B promoter region via association with RELA. Binds to poly(A) RNA. May be involved in 3'-end cleavage and polyadenylation of pre-mRNAs. Component of the tRNA-splicing ligase complex required to facilitate the enzymatic turnover of catalytic subunit RTCB: together with archease (ZBTB8OS), acts by facilitating the guanylylation of RTCB, a key intermediate step in tRNA ligation. Component of a multi-helicase-TICAM1 complex that acts as a cytoplasmic sensor of viral double-stranded RNA (dsRNA) and plays a role in the activation of a cascade of antiviral responses including the induction of pro-inflammatory cytokines via the adapter molecule TICAM1. Specifically binds (via helicase ATP-binding domain) on both short and long poly(I:C) dsRNA. The chain is ATP-dependent RNA helicase DDX1 (Ddx1) from Rattus norvegicus (Rat).